Consider the following 165-residue polypeptide: Nascent polypeptide-associated complex subunit alpha (165 aa).

The NAC-A/B domain maps to 14–78 (NRNEKKAREL…AKVDNFTQRL (65 aa)). The region spanning 126-165 (LSNDDIDLVVQQTNATKGQAIKALKEHNGDIVNAIMSLSK) is the UBA domain.

This sequence belongs to the NAC-alpha family. In terms of assembly, part of the nascent polypeptide-associated complex (NAC), consisting of EGD2 and EGD1. NAC associates with ribosomes via EGD1.

Its subcellular location is the cytoplasm. It is found in the nucleus. Component of the nascent polypeptide-associated complex (NAC), a dynamic component of the ribosomal exit tunnel, protecting the emerging polypeptides from interaction with other cytoplasmic proteins to ensure appropriate nascent protein targeting. The NAC complex also promotes mitochondrial protein import by enhancing productive ribosome interactions with the outer mitochondrial membrane and blocks the inappropriate interaction of ribosomes translating non-secretory nascent polypeptides with translocation sites in the membrane of the endoplasmic reticulum. EGD2 may also be involved in transcription regulation. This is Nascent polypeptide-associated complex subunit alpha (EGD2) from Candida glabrata (strain ATCC 2001 / BCRC 20586 / JCM 3761 / NBRC 0622 / NRRL Y-65 / CBS 138) (Yeast).